A 535-amino-acid chain; its full sequence is Beta-amylase (535 aa).

Substrate-binding residues include D51, H91, and D99. E184 acts as the Proton donor in catalysis. 3 residues coordinate substrate: K293, H298, and T340. E378 (proton acceptor) is an active-site residue. Substrate-binding positions include 379–380 (NA) and R418. Repeat copies occupy residues 489–499 (GPTGGMGGQAE), 500–510 (GPTCGMGGQVK), and 511–521 (GPTGGMGGQAE). The 4 X 11 AA tandem repeats stretch occupies residues 489 to 532 (GPTGGMGGQAEGPTCGMGGQVKGPTGGMGGQAEDPTSGIGGELP). A disordered region spans residues 513–535 (TGGMGGQAEDPTSGIGGELPATM). The 4; approximate repeat unit spans residues 522–532 (DPTSGIGGELP).

The protein belongs to the glycosyl hydrolase 14 family. In terms of assembly, monomer.

The catalysed reaction is Hydrolysis of (1-&gt;4)-alpha-D-glucosidic linkages in polysaccharides so as to remove successive maltose units from the non-reducing ends of the chains.. The chain is Beta-amylase (BMY1) from Hordeum vulgare (Barley).